A 332-amino-acid chain; its full sequence is Biotin synthase (332 aa).

A Radical SAM core domain is found at 53–282 (HFGKKVKLNM…TKEIRISGGR (230 aa)). [4Fe-4S] cluster-binding residues include Cys-71, Cys-75, and Cys-78. [2Fe-2S] cluster is bound by residues Cys-115, Cys-147, Cys-207, and Arg-277.

It belongs to the radical SAM superfamily. Biotin synthase family. As to quaternary structure, homodimer. [4Fe-4S] cluster is required as a cofactor. Requires [2Fe-2S] cluster as cofactor.

It carries out the reaction (4R,5S)-dethiobiotin + (sulfur carrier)-SH + 2 reduced [2Fe-2S]-[ferredoxin] + 2 S-adenosyl-L-methionine = (sulfur carrier)-H + biotin + 2 5'-deoxyadenosine + 2 L-methionine + 2 oxidized [2Fe-2S]-[ferredoxin]. It participates in cofactor biosynthesis; biotin biosynthesis; biotin from 7,8-diaminononanoate: step 2/2. Catalyzes the conversion of dethiobiotin (DTB) to biotin by the insertion of a sulfur atom into dethiobiotin via a radical-based mechanism. This is Biotin synthase from Bacillus mycoides (strain KBAB4) (Bacillus weihenstephanensis).